Here is a 217-residue protein sequence, read N- to C-terminus: Imidazole glycerol phosphate synthase subunit HisH (217 aa).

Residues 3 to 217 (TIAIVDYGVG…LYRNFVHWNP (215 aa)) enclose the Glutamine amidotransferase type-1 domain. The active-site Nucleophile is C82. Active-site residues include H197 and E199.

Heterodimer of HisH and HisF.

It is found in the cytoplasm. The catalysed reaction is 5-[(5-phospho-1-deoxy-D-ribulos-1-ylimino)methylamino]-1-(5-phospho-beta-D-ribosyl)imidazole-4-carboxamide + L-glutamine = D-erythro-1-(imidazol-4-yl)glycerol 3-phosphate + 5-amino-1-(5-phospho-beta-D-ribosyl)imidazole-4-carboxamide + L-glutamate + H(+). It catalyses the reaction L-glutamine + H2O = L-glutamate + NH4(+). Its pathway is amino-acid biosynthesis; L-histidine biosynthesis; L-histidine from 5-phospho-alpha-D-ribose 1-diphosphate: step 5/9. IGPS catalyzes the conversion of PRFAR and glutamine to IGP, AICAR and glutamate. The HisH subunit catalyzes the hydrolysis of glutamine to glutamate and ammonia as part of the synthesis of IGP and AICAR. The resulting ammonia molecule is channeled to the active site of HisF. The polypeptide is Imidazole glycerol phosphate synthase subunit HisH (Cupriavidus pinatubonensis (strain JMP 134 / LMG 1197) (Cupriavidus necator (strain JMP 134))).